Consider the following 382-residue polypeptide: 3-hydroxyisobutyryl-CoA hydrolase, mitochondrial (382 aa).

Substrate-binding residues include Glu-117, Gly-142, Glu-165, and Asp-173.

The protein belongs to the enoyl-CoA hydratase/isomerase family.

It localises to the mitochondrion. It catalyses the reaction 3-hydroxy-2-methylpropanoyl-CoA + H2O = 3-hydroxy-2-methylpropanoate + CoA + H(+). Its pathway is amino-acid degradation; L-valine degradation. Functionally, hydrolyzes 3-hydroxyisobutyryl-CoA (HIBYL-CoA), a saline catabolite. Has high activity toward isobutyryl-CoA. Could be an isobutyryl-CoA dehydrogenase that functions in valine catabolism. Also hydrolyzes 3-hydroxypropanoyl-CoA. This chain is 3-hydroxyisobutyryl-CoA hydrolase, mitochondrial (hibch), found in Danio rerio (Zebrafish).